The following is a 256-amino-acid chain: NAD(P)H-hydrate epimerase (256 aa).

Positions 1 to 18 are enriched in basic and acidic residues; that stretch reads MADPRRDPAAESKDRPST. Residues 1–21 are disordered; that stretch reads MADPRRDPAAESKDRPSTERV. One can recognise a YjeF N-terminal domain in the interval 23–229; that stretch reads AYTADAVRAA…DLGLEPYLRR (207 aa). 74–78 is a binding site for (6S)-NADPHX; it reads DNGGD. K(+) contacts are provided by Asn-75 and Asp-135. Residues 139–147 and Asp-172 contribute to the (6S)-NADPHX site; that span reads GIGRLADRR. Ser-175 contributes to the K(+) binding site.

Belongs to the NnrE/AIBP family. Requires K(+) as cofactor.

The enzyme catalyses (6R)-NADHX = (6S)-NADHX. It catalyses the reaction (6R)-NADPHX = (6S)-NADPHX. Its function is as follows. Catalyzes the epimerization of the S- and R-forms of NAD(P)HX, a damaged form of NAD(P)H that is a result of enzymatic or heat-dependent hydration. This is a prerequisite for the S-specific NAD(P)H-hydrate dehydratase to allow the repair of both epimers of NAD(P)HX. The chain is NAD(P)H-hydrate epimerase from Microbacterium testaceum (strain StLB037).